The chain runs to 1182 residues: Protein patched homolog 2 (1182 aa).

At 1 to 57 (MVRPLSLGELPPSYTPPARSSAPHILAGSLQAPLWLRAYFQGLLFSLGCRIQKHCGK) the chain is on the cytoplasmic side. Residues 58 to 78 (VLFLGLVAFGALALGLRVAVI) form a helical membrane-spanning segment. At 79–394 (ETDLEQLWVE…DILRAFSEVS (316 aa)) the chain is on the extracellular side. An N-linked (GlcNAc...) asparagine glycan is attached at Asn370. In terms of domain architecture, SSD spans 394 to 552 (STTRVVGGYL…MLVFPAILSL (159 aa)). The chain crosses the membrane as a helical span at residues 395–414 (TTRVVGGYLLMLAYACVTML). The Cytoplasmic portion of the chain corresponds to 415–428 (RWDCAQSQGAVGLA). The helical transmembrane segment at 429–449 (GVLLVALAVASGLGLCALLGI) threads the bilayer. Topologically, residues 450 to 457 (TFNAATTQ) are extracellular. A helical membrane pass occupies residues 458-478 (VLPFLALGIGVDDIFLLAHAF). At 479–501 (TKAPPDTPLPERMGECLRSTGTS) the chain is on the cytoplasmic side. The chain crosses the membrane as a helical span at residues 502-522 (VALTSVNNMVAFFMAALVPIP). Residues 523–531 (ALRAFSLQA) are Extracellular-facing. The chain crosses the membrane as a helical span at residues 532–552 (AIVVGCNFAAVMLVFPAILSL). The Cytoplasmic segment spans residues 553-686 (DLRRRHRQRL…APLLLQTRAK (134 aa)). A helical transmembrane segment spans residues 687-707 (ALVLLFFGALLGLSLYGATLV). At 708-963 (QDGLALTDVV…WEQYLGLRRC (256 aa)) the chain is on the extracellular side. An N-linked (GlcNAc...) asparagine glycan is attached at Asn812. Residues 964 to 984 (FLLAVCILLVCTFLVCALLLL) form a helical membrane-spanning segment. Topologically, residues 985-991 (SPWTAGL) are cytoplasmic. The helical transmembrane segment at 992-1012 (IVLVLAMMTVELFGIMGFLGI) threads the bilayer. Position 1013 (Lys1013) is a topological domain, extracellular. A helical membrane pass occupies residues 1014–1034 (LSAIPVVILVASIGIGVEFTV). Residues 1035 to 1064 (HVALGFLTSHGSRNLRAASALEQTFAPVTD) are Cytoplasmic-facing. The helical transmembrane segment at 1065–1085 (GAVSTLLGLLMLAGSNFDFII) threads the bilayer. Position 1086 (Arg1086) is a topological domain, extracellular. The chain crosses the membrane as a helical span at residues 1087-1107 (YFFVVLTVLTLLGLLHGLLLL). Over 1108-1182 (PVLLSILGPP…YVHPASEEPT (75 aa)) the chain is Cytoplasmic.

Belongs to the patched family. As to expression, expressed in epithelial cells of the developing hair, tooth and whisker.

The protein resides in the membrane. Functionally, plays a role in the control of cellular growth. May have a role in epidermal development. May act as a receptor for Sonic hedgehog (SHH). The chain is Protein patched homolog 2 (Ptch2) from Mus musculus (Mouse).